The sequence spans 363 residues: Homeobox protein DTH-2 (363 aa).

The segment at residues 133-192 (RRKRRILFSQAQIYELERRFKQQKYLSAPEREHLANLINLTPTQVKIWFQNHRYKCKRSQ) is a DNA-binding region (homeobox). The disordered stretch occupies residues 189 to 246 (KRSQKDKEKEQQKEKSYHLKKNIVDDKERSPNKQICNASSSDRSTPEEPVAKAKESGL). Residues 191–219 (SQKDKEKEQQKEKSYHLKKNIVDDKERSP) show a composition bias toward basic and acidic residues. The span at 220-231 (NKQICNASSSDR) shows a compositional bias: polar residues. The span at 232–246 (STPEEPVAKAKESGL) shows a compositional bias: basic and acidic residues.

The protein belongs to the NK-2 homeobox family. As to expression, intestine and unidentified peripheral parenchymal cells. Slightly higher levels in the cephalic region compared to other body regions.

The protein localises to the nucleus. This protein might be involved in determination and/or differentiation of nerve cells in the continuous replacement of neurons in the cephalic region. In Girardia tigrina (Planarian), this protein is Homeobox protein DTH-2 (DTH-2).